An 88-amino-acid polypeptide reads, in one-letter code: Large ribosomal subunit protein bL27 (88 aa).

The interval 1–22 is disordered; sequence MAQKKAGGSSRNGRDSAGRRLG.

It belongs to the bacterial ribosomal protein bL27 family.

The chain is Large ribosomal subunit protein bL27 from Gluconobacter oxydans (strain 621H) (Gluconobacter suboxydans).